Reading from the N-terminus, the 172-residue chain is Nicotinamide-nucleotide adenylyltransferase (172 aa).

This sequence belongs to the archaeal NMN adenylyltransferase family.

It localises to the cytoplasm. It catalyses the reaction beta-nicotinamide D-ribonucleotide + ATP + H(+) = diphosphate + NAD(+). It functions in the pathway cofactor biosynthesis; NAD(+) biosynthesis; NAD(+) from nicotinamide D-ribonucleotide: step 1/1. This chain is Nicotinamide-nucleotide adenylyltransferase, found in Saccharolobus solfataricus (strain ATCC 35092 / DSM 1617 / JCM 11322 / P2) (Sulfolobus solfataricus).